Here is a 435-residue protein sequence, read N- to C-terminus: Serine--tRNA ligase (435 aa).

234–236 is an L-serine binding site; it reads TAE. ATP is bound at residue 265–267; sequence RRE. Glu-288 is an L-serine binding site. 352–355 lines the ATP pocket; that stretch reads EISS. L-serine is bound at residue Ser-388.

This sequence belongs to the class-II aminoacyl-tRNA synthetase family. Type-1 seryl-tRNA synthetase subfamily. In terms of assembly, homodimer. The tRNA molecule binds across the dimer.

It localises to the cytoplasm. It catalyses the reaction tRNA(Ser) + L-serine + ATP = L-seryl-tRNA(Ser) + AMP + diphosphate + H(+). The enzyme catalyses tRNA(Sec) + L-serine + ATP = L-seryl-tRNA(Sec) + AMP + diphosphate + H(+). The protein operates within aminoacyl-tRNA biosynthesis; selenocysteinyl-tRNA(Sec) biosynthesis; L-seryl-tRNA(Sec) from L-serine and tRNA(Sec): step 1/1. Functionally, catalyzes the attachment of serine to tRNA(Ser). Is also able to aminoacylate tRNA(Sec) with serine, to form the misacylated tRNA L-seryl-tRNA(Sec), which will be further converted into selenocysteinyl-tRNA(Sec). This is Serine--tRNA ligase from Synechococcus sp. (strain JA-3-3Ab) (Cyanobacteria bacterium Yellowstone A-Prime).